We begin with the raw amino-acid sequence, 66 residues long: DNA gyrase inhibitor YacG (66 aa).

Positions 9, 12, 28, and 32 each coordinate Zn(2+).

Belongs to the DNA gyrase inhibitor YacG family. Interacts with GyrB. It depends on Zn(2+) as a cofactor.

Functionally, inhibits all the catalytic activities of DNA gyrase by preventing its interaction with DNA. Acts by binding directly to the C-terminal domain of GyrB, which probably disrupts DNA binding by the gyrase. The polypeptide is DNA gyrase inhibitor YacG (Pseudomonas fluorescens (strain Pf0-1)).